The primary structure comprises 337 residues: Quinolinate synthase (337 aa).

2 residues coordinate iminosuccinate: His-38 and Ser-59. Position 104 (Cys-104) interacts with [4Fe-4S] cluster. Iminosuccinate-binding positions include 130–132 (YAN) and Ser-147. A [4Fe-4S] cluster-binding site is contributed by Cys-191. Iminosuccinate-binding positions include 217–219 (HPE) and Thr-234. Cys-288 is a binding site for [4Fe-4S] cluster.

The protein belongs to the quinolinate synthase family. Type 1 subfamily. [4Fe-4S] cluster is required as a cofactor.

Its subcellular location is the cytoplasm. The catalysed reaction is iminosuccinate + dihydroxyacetone phosphate = quinolinate + phosphate + 2 H2O + H(+). It participates in cofactor biosynthesis; NAD(+) biosynthesis; quinolinate from iminoaspartate: step 1/1. In terms of biological role, catalyzes the condensation of iminoaspartate with dihydroxyacetone phosphate to form quinolinate. This chain is Quinolinate synthase, found in Wigglesworthia glossinidia brevipalpis.